We begin with the raw amino-acid sequence, 506 residues long: D-alanine--D-alanyl carrier protein ligase (506 aa).

Residue threonine 152 to serine 153 participates in ATP binding. Aspartate 197 is a binding site for D-alanine. Asparagine 292–threonine 297 contributes to the ATP binding site. Valine 301 provides a ligand contact to D-alanine. Residues aspartate 383, tyrosine 395–arginine 398, and lysine 494 contribute to the ATP site. Residue lysine 494 participates in D-alanine binding.

The protein belongs to the ATP-dependent AMP-binding enzyme family. DltA subfamily.

It localises to the cytoplasm. The enzyme catalyses holo-[D-alanyl-carrier protein] + D-alanine + ATP = D-alanyl-[D-alanyl-carrier protein] + AMP + diphosphate. It participates in cell wall biogenesis; lipoteichoic acid biosynthesis. Catalyzes the first step in the D-alanylation of lipoteichoic acid (LTA), the activation of D-alanine and its transfer onto the D-alanyl carrier protein (Dcp) DltC. In an ATP-dependent two-step reaction, forms a high energy D-alanyl-AMP intermediate, followed by transfer of the D-alanyl residue as a thiol ester to the phosphopantheinyl prosthetic group of the Dcp. D-alanylation of LTA plays an important role in modulating the properties of the cell wall in Gram-positive bacteria, influencing the net charge of the cell wall. In Lacticaseibacillus rhamnosus (Lactobacillus rhamnosus), this protein is D-alanine--D-alanyl carrier protein ligase.